The sequence spans 445 residues: Ribosomal protein uS12 methylthiotransferase RimO (445 aa).

The MTTase N-terminal domain occupies 4–119 (IKVALVSLGC…LLESIKVFLK (116 aa)). [4Fe-4S] cluster-binding residues include Cys-13, Cys-48, Cys-82, Cys-156, Cys-160, and Cys-163. The Radical SAM core domain occupies 142-372 (TTPTYTAYVR…MILQQSISKD (231 aa)). The region spanning 375 to 441 (KEKIGKIYEV…EYDLIGVVYN (67 aa)) is the TRAM domain.

It belongs to the methylthiotransferase family. RimO subfamily. [4Fe-4S] cluster serves as cofactor.

The protein resides in the cytoplasm. The enzyme catalyses L-aspartate(89)-[ribosomal protein uS12]-hydrogen + (sulfur carrier)-SH + AH2 + 2 S-adenosyl-L-methionine = 3-methylsulfanyl-L-aspartate(89)-[ribosomal protein uS12]-hydrogen + (sulfur carrier)-H + 5'-deoxyadenosine + L-methionine + A + S-adenosyl-L-homocysteine + 2 H(+). In terms of biological role, catalyzes the methylthiolation of an aspartic acid residue of ribosomal protein uS12. In Clostridium botulinum (strain Okra / Type B1), this protein is Ribosomal protein uS12 methylthiotransferase RimO.